The chain runs to 310 residues: tRNA pseudouridine synthase B (310 aa).

D47 serves as the catalytic Nucleophile.

It belongs to the pseudouridine synthase TruB family. Type 1 subfamily.

The enzyme catalyses uridine(55) in tRNA = pseudouridine(55) in tRNA. Its function is as follows. Responsible for synthesis of pseudouridine from uracil-55 in the psi GC loop of transfer RNAs. This is tRNA pseudouridine synthase B from Psychromonas ingrahamii (strain DSM 17664 / CCUG 51855 / 37).